We begin with the raw amino-acid sequence, 358 residues long: Vanillin synthase (358 aa).

The N-terminal stretch at 1 to 21 (MARLLLLLVGVLIACAAGARA) is a signal peptide. Positions 22-140 (GSEFLAEDNP…RGNHKLTSAI (119 aa)) are cleaved as a propeptide — activation peptide. Asn-125 carries N-linked (GlcNAc...) asparagine glycosylation. Cystine bridges form between Cys-162/Cys-205 and Cys-196/Cys-238. The active site involves Cys-165. Residue Asn-254 is glycosylated (N-linked (GlcNAc...) asparagine). Cys-296 and Cys-346 form a disulfide bridge. Active-site residues include His-305 and Asn-325.

It belongs to the peptidase C1 family.

The catalysed reaction is (E)-ferulate + H2O = vanillin + acetate. The enzyme catalyses 4-O-beta-D-glucosyl-trans-ferulate + H2O = 4-O-beta-D-glucosyl-vanillin + acetate. The protein operates within aromatic compound metabolism; phenylpropanoid biosynthesis. In terms of biological role, involved in the biosynthesis of vanillin and derivative natural products. Catalyzes the double carbon bond cleavage of ferulic acid to vanillin and of respective glucosides. This Glechoma hederacea (Ground-ivy) protein is Vanillin synthase.